A 228-amino-acid polypeptide reads, in one-letter code: UPF0502 protein Rfer_1648 (228 aa).

It belongs to the UPF0502 family.

The polypeptide is UPF0502 protein Rfer_1648 (Albidiferax ferrireducens (strain ATCC BAA-621 / DSM 15236 / T118) (Rhodoferax ferrireducens)).